The primary structure comprises 359 residues: Guanine nucleotide-binding protein G(o) subunit alpha (359 aa).

A disordered region spans residues Met1–Arg26. Residue Gly2 is the site of N-myristoyl glycine attachment. Cys4 carries the S-palmitoyl cysteine lipid modification. One can recognise a G-alpha domain in the interval Asn34–Leu359. A G1 motif region spans residues Lys37–Thr50. Residues Gly42 to Ser49, Leu178 to Thr184, Asp203 to Gln207, Asn272 to Asp275, and Ala331 contribute to the GTP site. The Mg(2+) site is built by Ser49 and Thr184. The G2 motif stretch occupies residues Asp176–Thr184. The G3 motif stretch occupies residues Tyr199–Arg208. Positions Ile268–Asp275 are G4 motif. The G5 motif stretch occupies residues Thr329–Thr334.

Belongs to the G-alpha family. G(i/o/t/z) subfamily. In terms of assembly, g proteins are composed of 3 units; alpha, beta and gamma. The alpha chain contains the guanine nucleotide binding site.

Functionally, guanine nucleotide-binding proteins (G proteins) are involved as modulators or transducers in various transmembrane signaling systems. The G(o) protein function is not clear. The sequence is that of Guanine nucleotide-binding protein G(o) subunit alpha from Geodia cydonium (Sponge).